The chain runs to 241 residues: Ribonuclease PH (241 aa).

Phosphate is bound by residues arginine 87 and 125–127 (GTR).

Belongs to the RNase PH family. Homohexameric ring arranged as a trimer of dimers.

The catalysed reaction is tRNA(n+1) + phosphate = tRNA(n) + a ribonucleoside 5'-diphosphate. Its function is as follows. Phosphorolytic 3'-5' exoribonuclease that plays an important role in tRNA 3'-end maturation. Removes nucleotide residues following the 3'-CCA terminus of tRNAs; can also add nucleotides to the ends of RNA molecules by using nucleoside diphosphates as substrates, but this may not be physiologically important. Probably plays a role in initiation of 16S rRNA degradation (leading to ribosome degradation) during starvation. The sequence is that of Ribonuclease PH from Salinispora tropica (strain ATCC BAA-916 / DSM 44818 / JCM 13857 / NBRC 105044 / CNB-440).